The primary structure comprises 222 residues: UPF0173 metal-dependent hydrolase Kcr_0055 (222 aa).

This sequence belongs to the UPF0173 family.

This is UPF0173 metal-dependent hydrolase Kcr_0055 from Korarchaeum cryptofilum (strain OPF8).